The sequence spans 232 residues: Ribose-5-phosphate isomerase A (232 aa).

Substrate is bound by residues 28 to 31, 83 to 86, and 96 to 99; these read TGST, DGAD, and KGGG. Glu-105 functions as the Proton acceptor in the catalytic mechanism. A substrate-binding site is contributed by Lys-123.

It belongs to the ribose 5-phosphate isomerase family. Homodimer.

It catalyses the reaction aldehydo-D-ribose 5-phosphate = D-ribulose 5-phosphate. Its pathway is carbohydrate degradation; pentose phosphate pathway; D-ribose 5-phosphate from D-ribulose 5-phosphate (non-oxidative stage): step 1/1. In terms of biological role, catalyzes the reversible conversion of ribose-5-phosphate to ribulose 5-phosphate. This is Ribose-5-phosphate isomerase A from Rhodopseudomonas palustris (strain BisB18).